The sequence spans 72 residues: UPF0270 protein ESA_04379 (72 aa).

It belongs to the UPF0270 family.

The protein is UPF0270 protein ESA_04379 of Cronobacter sakazakii (strain ATCC BAA-894) (Enterobacter sakazakii).